We begin with the raw amino-acid sequence, 392 residues long: Phosphoglycerate kinase (392 aa).

Substrate-binding positions include 21–23 (DMN), R36, 59–62 (HLGR), R114, and R147. ATP-binding positions include K198, E320, and 346 to 349 (GGDT).

The protein belongs to the phosphoglycerate kinase family. Monomer.

The protein localises to the cytoplasm. The enzyme catalyses (2R)-3-phosphoglycerate + ATP = (2R)-3-phospho-glyceroyl phosphate + ADP. It functions in the pathway carbohydrate degradation; glycolysis; pyruvate from D-glyceraldehyde 3-phosphate: step 2/5. The polypeptide is Phosphoglycerate kinase (Neisseria meningitidis serogroup C (strain 053442)).